A 308-amino-acid polypeptide reads, in one-letter code: MYYASTCMDHEIVEKKYKLGLNVTDNYKVRYNISLISQIFEGRCDYKNVVRLSLPKSLDLYKTGSNHYAYTLEVNMINVEKIYKLDNFEDVKELIDLGADINEAIKNIIIVNNIDSLKYLLEKGANIDLIDSYLAKMGNIDIFEFLFVKKCPMNKFLPIAVEYGHLNLVKFLVEKGVYVDFIDRTKYTFSEYTPLVAACSAGHIKIVEYLIEKGANYKSSYGVYLAAEKGHYDIVKFLIDKGTDLEKYGLRSLNEVIKKGHFDIMKLFINSGLEIDYDYYIYKAGLRGHTDIVKYLVMMQMSKQIQKI.

6 ANK repeats span residues 100-129, 152-181, 190-217, 218-247, 249-277, and 279-305; these read DINE…NIDL, PMNK…YVDF, SEYT…GANY, KSSY…DLEK, GLRS…EIDY, and YYIY…SKQI.

This chain is Putative ankyrin repeat protein R835, found in Acanthamoeba polyphaga (Amoeba).